The primary structure comprises 101 residues: Putative membrane protein insertion efficiency factor (101 aa).

This sequence belongs to the UPF0161 family.

It localises to the cell membrane. Could be involved in insertion of integral membrane proteins into the membrane. In Lacticaseibacillus casei (strain BL23) (Lactobacillus casei), this protein is Putative membrane protein insertion efficiency factor.